The primary structure comprises 280 residues: Putative ABC transporter ATP-binding protein PYRAB03730 (280 aa).

The ABC transporter domain maps to 4–244; the sequence is IEVENVSFKY…VEFLERIGIR (241 aa). 38-45 is an ATP binding site; the sequence is GPSGSGKS.

This sequence belongs to the ABC transporter superfamily.

The protein resides in the cell membrane. Functionally, probably part of an ABC transporter complex. Responsible for energy coupling to the transport system. This chain is Putative ABC transporter ATP-binding protein PYRAB03730, found in Pyrococcus abyssi (strain GE5 / Orsay).